We begin with the raw amino-acid sequence, 438 residues long: GDP-mannose 6-dehydrogenase (438 aa).

NAD(+) is bound by residues tyrosine 10, valine 11, aspartate 30, lysine 35, threonine 86, and threonine 124. GDP-alpha-D-mannuronate-binding residues include glutamate 161, lysine 210, asparagine 214, histidine 217, asparagine 225, tyrosine 256, tyrosine 257, arginine 259, phenylalanine 262, and glycine 265. Cysteine 268 is a catalytic residue. Residue lysine 271 participates in NAD(+) binding. A GDP-alpha-D-mannuronate-binding site is contributed by lysine 324. Arginine 331 serves as a coordination point for NAD(+).

This sequence belongs to the UDP-glucose/GDP-mannose dehydrogenase family.

It carries out the reaction GDP-alpha-D-mannose + 2 NAD(+) + H2O = GDP-alpha-D-mannuronate + 2 NADH + 3 H(+). It participates in glycan biosynthesis; alginate biosynthesis. Its function is as follows. Catalyzes the oxidation of guanosine diphospho-D-mannose (GDP-D-mannose) to GDP-D-mannuronic acid, a precursor for alginate polymerization. The alginate layer causes a mucoid phenotype and provides a protective barrier against host immune defenses and antibiotics. The sequence is that of GDP-mannose 6-dehydrogenase (algD) from Pseudomonas putida (strain ATCC 47054 / DSM 6125 / CFBP 8728 / NCIMB 11950 / KT2440).